We begin with the raw amino-acid sequence, 128 residues long: Sulfurtransferase TusD (128 aa).

The active-site Cysteine persulfide intermediate is the Cys-78.

It belongs to the DsrE/TusD family. Heterohexamer, formed by a dimer of trimers. The hexameric TusBCD complex contains 2 copies each of TusB, TusC and TusD. The TusBCD complex interacts with TusE.

The protein localises to the cytoplasm. Its function is as follows. Part of a sulfur-relay system required for 2-thiolation of 5-methylaminomethyl-2-thiouridine (mnm(5)s(2)U) at tRNA wobble positions. Accepts sulfur from TusA and transfers it in turn to TusE. The polypeptide is Sulfurtransferase TusD (Cronobacter sakazakii (strain ATCC BAA-894) (Enterobacter sakazakii)).